Here is a 279-residue protein sequence, read N- to C-terminus: Phosphatidylglycerol--prolipoprotein diacylglyceryl transferase (279 aa).

The next 3 membrane-spanning stretches (helical) occupy residues 22-42 (WYGI…QAAL), 52-72 (LIDI…IYFV), and 89-109 (IWHG…SGII). Residue R137 coordinates a 1,2-diacyl-sn-glycero-3-phospho-(1'-sn-glycerol). The next 2 helical transmembrane spans lie at 203–223 (LGET…FVEA) and 235–255 (IRVA…FVIY).

This sequence belongs to the Lgt family.

Its subcellular location is the cell membrane. The enzyme catalyses L-cysteinyl-[prolipoprotein] + a 1,2-diacyl-sn-glycero-3-phospho-(1'-sn-glycerol) = an S-1,2-diacyl-sn-glyceryl-L-cysteinyl-[prolipoprotein] + sn-glycerol 1-phosphate + H(+). Its pathway is protein modification; lipoprotein biosynthesis (diacylglyceryl transfer). In terms of biological role, catalyzes the transfer of the diacylglyceryl group from phosphatidylglycerol to the sulfhydryl group of the N-terminal cysteine of a prolipoprotein, the first step in the formation of mature lipoproteins. The protein is Phosphatidylglycerol--prolipoprotein diacylglyceryl transferase of Staphylococcus epidermidis (strain ATCC 35984 / DSM 28319 / BCRC 17069 / CCUG 31568 / BM 3577 / RP62A).